A 339-amino-acid chain; its full sequence is MNNWKHNHVLDLSTFSLEDYKTVLELTTRFKDVHKSSSKKLPALHGRLIANLFFEPSTRTRTSFELAAKRLSADVQNFSVSSSSLSKGETPLDTILTYISMGADILVIRHESTNVPAELANYVDINNINTSILNAGDGFHSHPSQGLLDLFTLATFFNPNEPSTNSLLNKKITIVGDILHSRVARSNLWALTACGAEVTLCGPPSLLPEEFIDFVQNPRLGQNFDPINKRGSVFIKRSLKDALKNSDAVMTLRLQKERMKQNMLKDLDSYYAQYGITHESLKWCEKKVPVLHPGPVNRGVEISNRLVEDNSINLISKQVENGIPTRMALLYLLGLNKKD.

Carbamoyl phosphate-binding residues include R59 and T60. K87 is a binding site for L-aspartate. Carbamoyl phosphate is bound by residues R109, H142, and Q145. 2 residues coordinate L-aspartate: R182 and R253. Carbamoyl phosphate-binding residues include G294 and P295.

Belongs to the aspartate/ornithine carbamoyltransferase superfamily. ATCase family. Heterododecamer (2C3:3R2) of six catalytic PyrB chains organized as two trimers (C3), and six regulatory PyrI chains organized as three dimers (R2).

It catalyses the reaction carbamoyl phosphate + L-aspartate = N-carbamoyl-L-aspartate + phosphate + H(+). The protein operates within pyrimidine metabolism; UMP biosynthesis via de novo pathway; (S)-dihydroorotate from bicarbonate: step 2/3. In terms of biological role, catalyzes the condensation of carbamoyl phosphate and aspartate to form carbamoyl aspartate and inorganic phosphate, the committed step in the de novo pyrimidine nucleotide biosynthesis pathway. This Prochlorococcus marinus (strain NATL1A) protein is Aspartate carbamoyltransferase catalytic subunit.